Consider the following 93-residue polypeptide: M-zodatoxin-Lt5a (93 aa).

The signal sequence occupies residues 1 to 22; that stretch reads MKYCVVILALLVALVCITESRS. A propeptide spanning residues 23 to 64 is cleaved from the precursor; it reads TETGYAVAETLEDNDLDELQAYLEEIAEASEMEDFSNIEEAR. The short motif at 61–64 is the Processing quadruplet motif element; the sequence is EEAR. Leucine 92 is modified (leucine amide).

Post-translationally, cleavage of the propeptide depends on the processing quadruplet motif (XXXR, with at least one of X being E). As to expression, expressed by the venom gland.

The protein resides in the secreted. In terms of biological role, has antimicrobial activity against. Gram-positive bacteria (A.globiformis VKM Ac-1112 (MIC=1.1 uM), and B.subtilis VKM B-501 (MIC=0.6 uM)), Gram-negative bacteria (E.coli DH5-alpha (MIC=0.6 uM), E.coli MH1 (MIC=0.6 uM), and P.aeruginosa PAO1 (MIC=18 uM)), and yeasts (P.pastoris GS115 (MIC&gt;37 uM), and S.cerevisiae Y190 (MIC&gt;37 uM)). Also has a moderate hemolytic activity against rabbit erythrocytes. Causes paralysis, but is not lethal when injected into insect (M.domestica) larvae. This chain is M-zodatoxin-Lt5a, found in Lachesana tarabaevi (Spider).